The following is a 130-amino-acid chain: Glycine cleavage system H protein (130 aa).

Positions 24–106 (TFTVGITDHA…YGDGWLYRIT (83 aa)) constitute a Lipoyl-binding domain. Lys-65 carries the post-translational modification N6-lipoyllysine.

It belongs to the GcvH family. In terms of assembly, the glycine cleavage system is composed of four proteins: P, T, L and H. Requires (R)-lipoate as cofactor.

In terms of biological role, the glycine cleavage system catalyzes the degradation of glycine. The H protein shuttles the methylamine group of glycine from the P protein to the T protein. The protein is Glycine cleavage system H protein of Coxiella burnetii (strain CbuK_Q154) (Coxiella burnetii (strain Q154)).